A 273-amino-acid chain; its full sequence is Formamidopyrimidine-DNA glycosylase (273 aa).

Proline 2 serves as the catalytic Schiff-base intermediate with DNA. Glutamate 3 functions as the Proton donor in the catalytic mechanism. The active-site Proton donor; for beta-elimination activity is lysine 59. DNA contacts are provided by histidine 92 and arginine 111. The segment at 239 to 273 (KVYGKTGEPCVICGTPIEKIKLNGRGTHFCPHCQK) adopts an FPG-type zinc-finger fold. Arginine 263 (proton donor; for delta-elimination activity) is an active-site residue.

It belongs to the FPG family. In terms of assembly, monomer. Zn(2+) serves as cofactor.

The catalysed reaction is Hydrolysis of DNA containing ring-opened 7-methylguanine residues, releasing 2,6-diamino-4-hydroxy-5-(N-methyl)formamidopyrimidine.. It catalyses the reaction 2'-deoxyribonucleotide-(2'-deoxyribose 5'-phosphate)-2'-deoxyribonucleotide-DNA = a 3'-end 2'-deoxyribonucleotide-(2,3-dehydro-2,3-deoxyribose 5'-phosphate)-DNA + a 5'-end 5'-phospho-2'-deoxyribonucleoside-DNA + H(+). Involved in base excision repair of DNA damaged by oxidation or by mutagenic agents. Acts as a DNA glycosylase that recognizes and removes damaged bases. Has a preference for oxidized purines, such as 7,8-dihydro-8-oxoguanine (8-oxoG). Has AP (apurinic/apyrimidinic) lyase activity and introduces nicks in the DNA strand. Cleaves the DNA backbone by beta-delta elimination to generate a single-strand break at the site of the removed base with both 3'- and 5'-phosphates. This Listeria innocua serovar 6a (strain ATCC BAA-680 / CLIP 11262) protein is Formamidopyrimidine-DNA glycosylase.